We begin with the raw amino-acid sequence, 526 residues long: ATP synthase subunit alpha (526 aa).

Residue 171-178 (GDRQTGKT) coordinates ATP.

Belongs to the ATPase alpha/beta chains family. F-type ATPases have 2 components, CF(1) - the catalytic core - and CF(0) - the membrane proton channel. CF(1) has five subunits: alpha(3), beta(3), gamma(1), delta(1), epsilon(1). CF(0) has four main subunits: a(1), b(1), b'(1) and c(9-12).

It localises to the cell inner membrane. It carries out the reaction ATP + H2O + 4 H(+)(in) = ADP + phosphate + 5 H(+)(out). In terms of biological role, produces ATP from ADP in the presence of a proton gradient across the membrane. The alpha chain is a regulatory subunit. This chain is ATP synthase subunit alpha, found in Chlorobium chlorochromatii (strain CaD3).